Here is a 158-residue protein sequence, read N- to C-terminus: NAD(P)H-quinone oxidoreductase subunit J, chloroplastic (158 aa).

Belongs to the complex I 30 kDa subunit family. In terms of assembly, NDH is composed of at least 16 different subunits, 5 of which are encoded in the nucleus.

The protein localises to the plastid. Its subcellular location is the chloroplast thylakoid membrane. The enzyme catalyses a plastoquinone + NADH + (n+1) H(+)(in) = a plastoquinol + NAD(+) + n H(+)(out). It catalyses the reaction a plastoquinone + NADPH + (n+1) H(+)(in) = a plastoquinol + NADP(+) + n H(+)(out). In terms of biological role, NDH shuttles electrons from NAD(P)H:plastoquinone, via FMN and iron-sulfur (Fe-S) centers, to quinones in the photosynthetic chain and possibly in a chloroplast respiratory chain. The immediate electron acceptor for the enzyme in this species is believed to be plastoquinone. Couples the redox reaction to proton translocation, and thus conserves the redox energy in a proton gradient. The protein is NAD(P)H-quinone oxidoreductase subunit J, chloroplastic of Lotus japonicus (Lotus corniculatus var. japonicus).